A 37-amino-acid polypeptide reads, in one-letter code: Large ribosomal subunit protein bL36c (37 aa).

It belongs to the bacterial ribosomal protein bL36 family.

Its subcellular location is the plastid. The protein localises to the organellar chromatophore. The protein is Large ribosomal subunit protein bL36c of Paulinella chromatophora.